A 172-amino-acid chain; its full sequence is Ribosome maturation factor RimM (172 aa).

One can recognise a PRC barrel domain in the interval 96-168; it reads DGEFYYHEII…RVQVELMEGL (73 aa).

The protein belongs to the RimM family. As to quaternary structure, binds ribosomal protein uS19.

Its subcellular location is the cytoplasm. Functionally, an accessory protein needed during the final step in the assembly of 30S ribosomal subunit, possibly for assembly of the head region. Essential for efficient processing of 16S rRNA. May be needed both before and after RbfA during the maturation of 16S rRNA. It has affinity for free ribosomal 30S subunits but not for 70S ribosomes. The chain is Ribosome maturation factor RimM from Streptococcus agalactiae serotype Ia (strain ATCC 27591 / A909 / CDC SS700).